Reading from the N-terminus, the 211-residue chain is Phosphoglycerate mutase (211 aa).

Substrate-binding positions include 14–21 (RHGESEWN) and 27–28 (TG). The active-site Tele-phosphohistidine intermediate is His-15. A Phosphothreonine modification is found at Thr-37. Phosphoserine is present on Ser-62. Substrate contacts are provided by residues Arg-66, 93–96 (ERYY), Lys-104, 120–121 (RR), and 164–165 (GN). The active-site Proton donor/acceptor is the Glu-93. Tyr-96 is subject to Phosphotyrosine. Ser-166 is subject to Phosphoserine.

This sequence belongs to the phosphoglycerate mutase family. BPG-dependent PGAM subfamily. In terms of assembly, monomer. Post-translationally, the N-terminus is blocked.

It catalyses the reaction (2R)-2-phosphoglycerate = (2R)-3-phosphoglycerate. The protein operates within carbohydrate degradation; glycolysis; pyruvate from D-glyceraldehyde 3-phosphate: step 3/5. The sequence is that of Phosphoglycerate mutase (gpm1) from Schizosaccharomyces pombe (strain 972 / ATCC 24843) (Fission yeast).